A 691-amino-acid polypeptide reads, in one-letter code: DNA ligase (691 aa).

NAD(+) is bound by residues 53–57, 102–103, and E135; these read DSEYD and SL. K137 functions as the N6-AMP-lysine intermediate in the catalytic mechanism. Residues R158, E195, K310, and K334 each coordinate NAD(+). Residues C428, C431, C446, and C452 each contribute to the Zn(2+) site. One can recognise a BRCT domain in the interval 613 to 691; that stretch reads SEGLPLDGQT…EEEFLVLVGE (79 aa).

The protein belongs to the NAD-dependent DNA ligase family. LigA subfamily. Mg(2+) serves as cofactor. It depends on Mn(2+) as a cofactor.

The catalysed reaction is NAD(+) + (deoxyribonucleotide)n-3'-hydroxyl + 5'-phospho-(deoxyribonucleotide)m = (deoxyribonucleotide)n+m + AMP + beta-nicotinamide D-nucleotide.. Its function is as follows. DNA ligase that catalyzes the formation of phosphodiester linkages between 5'-phosphoryl and 3'-hydroxyl groups in double-stranded DNA using NAD as a coenzyme and as the energy source for the reaction. It is essential for DNA replication and repair of damaged DNA. In Psychrobacter cryohalolentis (strain ATCC BAA-1226 / DSM 17306 / VKM B-2378 / K5), this protein is DNA ligase.